Consider the following 594-residue polypeptide: MTRGLELLIAQTILQGFDAQYGRFLEVTSGAQQRFEQADWHAVQQAMKQRIHLYDHHVGLVVEQLRCITEGKSTDVDFLLRVKQQYTQLLPDYPRFEIAESFFNSVYCRLFDHRSLTPERLFIFSSQPERPFRTLPRPLAKDFFPERGWSHLLGKVLSDLPLRLAWQNKARDIGYIIASLQEALGEELLATCHLQVANELFYRNKAAWLVGKLVMPMATLPFLLPIHRSDEGELFVDTCLTTHAEASIVFGFARSYFMVYAPLPGALVEWLREILPGKTTAELYMAIGCQKHAKTESYREYLHYITRCDEQFIEAPGIRGMVMLVFTLPGFDRVFKVIKDRFAPQKEVTAAHVRACYQLVKEHDRVGRMADTQEFENFVLDKRQIAPGLLALLQAEAGNKLTDLGDRIVISHLYIERRMVPLNLWLEQVNGQALRDAVEEYGNAIRQLAAANIFPGDMLFKNFGVTRHGRVVFYDYDEICYMTEVNFRQIPPPRYPEDELASEPWYSVSPGDVFPEEFRHWLCADPRIGPLFEEMHADLLRADYWRELQTRIKNGHVEDVYAYRRKQRFSVRYGADSRPDKVFTPPSGRVRRSA.

ATP-binding positions include 315–321 (APGIRGM) and lysine 336. Residue aspartate 371 is part of the active site.

This sequence belongs to the AceK family.

It localises to the cytoplasm. The enzyme catalyses L-seryl-[isocitrate dehydrogenase] + ATP = O-phospho-L-seryl-[isocitrate dehydrogenase] + ADP + H(+). Its function is as follows. Bifunctional enzyme which can phosphorylate or dephosphorylate isocitrate dehydrogenase (IDH) on a specific serine residue. This is a regulatory mechanism which enables bacteria to bypass the Krebs cycle via the glyoxylate shunt in response to the source of carbon. When bacteria are grown on glucose, IDH is fully active and unphosphorylated, but when grown on acetate or ethanol, the activity of IDH declines drastically concomitant with its phosphorylation. This chain is Isocitrate dehydrogenase kinase/phosphatase, found in Klebsiella pneumoniae (strain 342).